The chain runs to 226 residues: Small ribosomal subunit protein uS5 (226 aa).

The tract at residues M1–E71 is disordered. The segment covering A24–R54 has biased composition (low complexity). In terms of domain architecture, S5 DRBM spans F72 to I135.

Belongs to the universal ribosomal protein uS5 family. As to quaternary structure, part of the 30S ribosomal subunit. Contacts proteins S4 and S8.

With S4 and S12 plays an important role in translational accuracy. Functionally, located at the back of the 30S subunit body where it stabilizes the conformation of the head with respect to the body. The sequence is that of Small ribosomal subunit protein uS5 from Mycoplasmoides gallisepticum (strain R(low / passage 15 / clone 2)) (Mycoplasma gallisepticum).